The primary structure comprises 162 residues: MARGLNKVMLIGHLGNDPERRETASGQSVVNFTLATSEGFKDSSGNLQERTEWHRIVAWGKLADICSQYLKKGRQVYIEGRLQTRSWDDNKTGDKKYATEIVCTDMQMLGAKDSGGGTSDASYSQNRPSYSRPSRPEPSSGNYGASPSSGGAQEFEKDDLPF.

An SSB domain is found at 5-110; it reads LNKVMLIGHL…IVCTDMQMLG (106 aa). The tract at residues 110–162 is disordered; that stretch reads GAKDSGGGTSDASYSQNRPSYSRPSRPEPSSGNYGASPSSGGAQEFEKDDLPF. Positions 122-140 are enriched in low complexity; it reads SYSQNRPSYSRPSRPEPSS. Polar residues predominate over residues 141 to 151; it reads GNYGASPSSGG.

Homotetramer.

This is Single-stranded DNA-binding protein 1 (ssb1) from Chlorobaculum tepidum (strain ATCC 49652 / DSM 12025 / NBRC 103806 / TLS) (Chlorobium tepidum).